The sequence spans 634 residues: Chaperone protein HtpG (634 aa).

The a; substrate-binding stretch occupies residues 1 to 342 (MTVETQKETL…SNDLSLNVSR (342 aa)). The tract at residues 343–559 (EILQKDPIID…EQDLGLQMRQ (217 aa)) is b. The c stretch occupies residues 560–634 (ILEASGQKVP…LNKLLVELSA (75 aa)).

This sequence belongs to the heat shock protein 90 family. Homodimer.

The protein resides in the cytoplasm. Functionally, molecular chaperone. Has ATPase activity. This Pseudomonas putida (strain ATCC 47054 / DSM 6125 / CFBP 8728 / NCIMB 11950 / KT2440) protein is Chaperone protein HtpG.